Here is an 86-residue protein sequence, read N- to C-terminus: Large ribosomal subunit protein bL27 (86 aa).

It belongs to the bacterial ribosomal protein bL27 family.

In Koribacter versatilis (strain Ellin345), this protein is Large ribosomal subunit protein bL27.